The chain runs to 306 residues: Curved DNA-binding protein (306 aa).

Positions 5-69 (DYYAIMGVKP…QRRAEYDQMW (65 aa)) constitute a J domain.

It localises to the cytoplasm. Its subcellular location is the nucleoid. In terms of biological role, DNA-binding protein that preferentially recognizes a curved DNA sequence. It is probably a functional analog of DnaJ; displays overlapping activities with DnaJ, but functions under different conditions, probably acting as a molecular chaperone in an adaptive response to environmental stresses other than heat shock. Lacks autonomous chaperone activity; binds native substrates and targets them for recognition by DnaK. Its activity is inhibited by the binding of CbpM. This Escherichia coli O7:K1 (strain IAI39 / ExPEC) protein is Curved DNA-binding protein.